Here is a 248-residue protein sequence, read N- to C-terminus: Triosephosphate isomerase A (248 aa).

Residues asparagine 11 and lysine 13 each contribute to the substrate site. Histidine 95 acts as the Electrophile in catalysis. The active-site Proton acceptor is the glutamate 165.

Belongs to the triosephosphate isomerase family. As to quaternary structure, homodimer.

It localises to the cytoplasm. The enzyme catalyses dihydroxyacetone phosphate = methylglyoxal + phosphate. The catalysed reaction is D-glyceraldehyde 3-phosphate = dihydroxyacetone phosphate. Its pathway is carbohydrate degradation; glycolysis; D-glyceraldehyde 3-phosphate from glycerone phosphate: step 1/1. It participates in carbohydrate biosynthesis; gluconeogenesis. Its function is as follows. Triosephosphate isomerase is an extremely efficient metabolic enzyme that catalyzes the interconversion between dihydroxyacetone phosphate (DHAP) and D-glyceraldehyde-3-phosphate (G3P) in glycolysis and gluconeogenesis. It is also responsible for the non-negligible production of methylglyoxal a reactive cytotoxic side-product that modifies and can alter proteins, DNA and lipids. This Danio rerio (Zebrafish) protein is Triosephosphate isomerase A (tpi1a).